Reading from the N-terminus, the 587-residue chain is Protein cereblon (587 aa).

Disordered regions lie at residues 1–56, 78–113, and 157–195; these read MDEE…PAEY, DVLQDDTASEGSHPSSDMSLESPGSEDDSDVQGLPN, and FSQERRRSRTSEETSQEEAAEEPDDPPPQQPPLPPIDIG. Composition is skewed to polar residues over residues 22–31 and 86–96; these read EDQSQSQGLQ and SEGSHPSSDMS. Residues 159–168 show a composition bias toward basic and acidic residues; the sequence is QERRRSRTSE. Positions 170 to 181 are enriched in acidic residues; that stretch reads TSQEEAAEEPDD. The span at 182 to 191 shows a compositional bias: pro residues; sequence PPPQQPPLPP. Residues 227–453 form the Lon N-terminal domain; sequence HMLIFLHHHI…LIKSTFKDET (227 aa). In terms of domain architecture, CULT spans 452 to 561; it reads ETLFFCRYCN…LSGSSVRIGK (110 aa). Cys457, Cys460, Cys526, and Cys529 together coordinate Zn(2+).

Belongs to the CRBN family. In terms of assembly, likely a component of a DCX (DDB1-CUL4-X-box) protein ligase complex. May interact with pic/DDB1. Post-translationally, ubiquitinated.

It is found in the nucleus. Its pathway is protein modification; protein ubiquitination. In terms of biological role, substrate recognition component of a DCX (DDB1-CUL4-X-box) E3 protein ligase complex that mediates the ubiquitination and subsequent proteasomal degradation of target proteins. Has an essential role in mediating growth by negatively regulating insulin signaling. It also has a role in maintaining presynaptic function in the neuromuscular junction synapses of third-instar larvae. This Drosophila simulans (Fruit fly) protein is Protein cereblon.